We begin with the raw amino-acid sequence, 245 residues long: 1-(5-phosphoribosyl)-5-[(5-phosphoribosylamino)methylideneamino] imidazole-4-carboxamide isomerase (245 aa).

The Proton acceptor role is filled by D10. The Proton donor role is filled by D135.

Belongs to the HisA/HisF family.

It localises to the cytoplasm. It carries out the reaction 1-(5-phospho-beta-D-ribosyl)-5-[(5-phospho-beta-D-ribosylamino)methylideneamino]imidazole-4-carboxamide = 5-[(5-phospho-1-deoxy-D-ribulos-1-ylimino)methylamino]-1-(5-phospho-beta-D-ribosyl)imidazole-4-carboxamide. The protein operates within amino-acid biosynthesis; L-histidine biosynthesis; L-histidine from 5-phospho-alpha-D-ribose 1-diphosphate: step 4/9. The chain is 1-(5-phosphoribosyl)-5-[(5-phosphoribosylamino)methylideneamino] imidazole-4-carboxamide isomerase from Methanosarcina barkeri (strain Fusaro / DSM 804).